We begin with the raw amino-acid sequence, 147 residues long: Small ribosomal subunit protein uS12 (147 aa).

This sequence belongs to the universal ribosomal protein uS12 family. Part of the 30S ribosomal subunit.

With S4 and S5 plays an important role in translational accuracy. Located at the interface of the 30S and 50S subunits. This is Small ribosomal subunit protein uS12 from Sulfolobus acidocaldarius (strain ATCC 33909 / DSM 639 / JCM 8929 / NBRC 15157 / NCIMB 11770).